Consider the following 723-residue polypeptide: LIM domain-binding protein 3 (723 aa).

Residues 1–84 (MSYSVTLTGP…NLSLTLQKSK (84 aa)) form the PDZ domain. Ser44, Ser98, and Asp112 each carry phosphoserine. Disordered regions lie at residues 89–134 (ISTT…GALE) and 164–193 (SPVA…RQYN). Phosphothreonine is present on Thr119. Ser121 and Ser123 each carry phosphoserine. Ser214 is subject to Phosphoserine. Omega-N-methylarginine is present on Arg216. 3 positions are modified to phosphoserine: Ser220, Ser251, and Asp288. 2 disordered regions span residues 280–423 (GTEY…YSPT) and 436–525 (SPAP…PQVT). Ala291 is modified (omega-N-methylarginine). Residues 309 to 376 (ATSPLLPASA…AAAASPAPSA (68 aa)) are compositionally biased toward low complexity. Ile327 bears the Phosphoserine mark. Ser330 is modified (omega-N-methylarginine). Residues 436 to 466 (SPAPTYTPSPAPTYSPSPAPAYTPSPAPNYT) show a composition bias toward pro residues. Over residues 490 to 509 (DSFSQKFAPGKSTTTVSKQT) the composition is skewed to polar residues. Residues Arg512 and Arg529 each carry the omega-N-methylarginine modification. LIM zinc-binding domains follow at residues 545–603 (PLCG…QFFA), 604–663 (PICA…LFST), and 664–723 (KCHG…AINV).

As to quaternary structure, interacts via its LIM domains with various PKC isoforms. Interacts via its PDZ domain with the ACTN2 C-terminal region. Interacts with MYOZ1, MYOZ2 and MYOZ3. In terms of tissue distribution, expressed primarily in adult heart and skeletal muscle, and detected at lower levels in lung. Isoforms are expressed in a tissue-specific manner. Isoform 1, isoform 3 and isoform 5 are expressed in heart, whereas isoform 2, isoform 4 and isoform 6 are expressed in skeletal muscle.

The protein resides in the cytoplasm. The protein localises to the perinuclear region. It localises to the cell projection. It is found in the pseudopodium. Its subcellular location is the cytoskeleton. The protein resides in the myofibril. The protein localises to the sarcomere. It localises to the z line. May function as an adapter in striated muscle to couple protein kinase C-mediated signaling via its LIM domains to the cytoskeleton. In Mus musculus (Mouse), this protein is LIM domain-binding protein 3.